The chain runs to 606 residues: Protein spire homolog 2 (606 aa).

In terms of domain architecture, KIND spans 21–219 (LSLEEVLKSY…RALFLETLEL (199 aa)). The segment at 147–181 (KHCGSNAAKDEGYSGQDEEEEEEEEEEEEGAGRGI) is disordered. Residues 162-175 (QDEEEEEEEEEEEE) are compositionally biased toward acidic residues. WH2 domains lie at 263 to 277 (QLMK…LKKV) and 357 to 374 (LHDR…LRPV). Disordered stretches follow at residues 438–464 (DEDS…RSFS) and 517–537 (CRSL…ASHG). Basic and acidic residues predominate over residues 445-464 (VDMRRVESSPTPLKRDRSFS). The spir-box stretch occupies residues 554–574 (LALTVDGVINVRRILVKAEME).

The protein belongs to the spire family.

It localises to the cytoplasm. The protein localises to the cytoskeleton. The protein resides in the cytosol. It is found in the cell membrane. Its subcellular location is the cytoplasmic vesicle membrane. Functionally, acts as an actin nucleation factor, remains associated with the slow-growing pointed end of the new filament. Involved in intracellular vesicle transport along actin fibers, providing a novel link between actin cytoskeleton dynamics and intracellular transport. Required for asymmetric spindle positioning and asymmetric cell division during oocyte meiosis. Required for normal formation of the cleavage furrow and for polar body extrusion during female germ cell meiosis. Also acts in the nucleus: together with SPIRE1 and SPIRE2, promotes assembly of nuclear actin filaments in response to DNA damage in order to facilitate movement of chromatin and repair factors after DNA damage. The sequence is that of Protein spire homolog 2 (spire2) from Danio rerio (Zebrafish).